Consider the following 571-residue polypeptide: RNA polymerase sigma factor SigA (571 aa).

Residues 321–391 (MVESNLRLVI…TRAIADQART (71 aa)) are sigma-70 factor domain-2. Residues 345–348 (DLIQ) carry the Interaction with polymerase core subunit RpoC motif. Residues 400–476 (ETINKVLRGA…DTAVESPAEA (77 aa)) form a sigma-70 factor domain-3 region. The tract at residues 489–542 (VLKTLTDRERFVLIHRFGLLDGRPKTLEEVGSAFNVTRERIRQIEAKALRKMRH) is sigma-70 factor domain-4. Residues 515–534 (LEEVGSAFNVTRERIRQIEA) constitute a DNA-binding region (H-T-H motif).

The protein belongs to the sigma-70 factor family. RpoD/SigA subfamily. In terms of assembly, interacts transiently with the RNA polymerase catalytic core.

It is found in the cytoplasm. Sigma factors are initiation factors that promote the attachment of RNA polymerase to specific initiation sites and are then released. This sigma factor is the primary sigma factor during exponential growth. This is RNA polymerase sigma factor SigA from Chlamydia muridarum (strain MoPn / Nigg).